The following is a 165-amino-acid chain: Nucleotide-binding protein Pro_0479 (165 aa).

It belongs to the YajQ family.

Nucleotide-binding protein. This Prochlorococcus marinus (strain SARG / CCMP1375 / SS120) protein is Nucleotide-binding protein Pro_0479.